Consider the following 78-residue polypeptide: MNISNNAGIDSNDLAKRGESLIRKSTNRYLTTVRIAFRAKQRRFDDFDGLLEESTIKPVQRSIIELSDEQDQPDLLPG.

This sequence belongs to the RNA polymerase subunit omega family. In terms of assembly, in cyanobacteria the RNAP catalytic core is composed of 2 alpha, 1 beta, 1 beta', 1 gamma and 1 omega subunit. When a sigma factor is associated with the core the holoenzyme is formed, which can initiate transcription.

It carries out the reaction RNA(n) + a ribonucleoside 5'-triphosphate = RNA(n+1) + diphosphate. Promotes RNA polymerase assembly. Latches the N- and C-terminal regions of the beta' subunit thereby facilitating its interaction with the beta and alpha subunits. The chain is DNA-directed RNA polymerase subunit omega from Prochlorococcus marinus (strain MIT 9301).